Reading from the N-terminus, the 454-residue chain is UDP-N-acetylmuramoylalanine--D-glutamate ligase (454 aa).

An ATP-binding site is contributed by 115–121 (GTNGKTT).

Belongs to the MurCDEF family.

The protein localises to the cytoplasm. It catalyses the reaction UDP-N-acetyl-alpha-D-muramoyl-L-alanine + D-glutamate + ATP = UDP-N-acetyl-alpha-D-muramoyl-L-alanyl-D-glutamate + ADP + phosphate + H(+). It functions in the pathway cell wall biogenesis; peptidoglycan biosynthesis. Functionally, cell wall formation. Catalyzes the addition of glutamate to the nucleotide precursor UDP-N-acetylmuramoyl-L-alanine (UMA). In Thermoanaerobacter pseudethanolicus (strain ATCC 33223 / 39E) (Clostridium thermohydrosulfuricum), this protein is UDP-N-acetylmuramoylalanine--D-glutamate ligase.